A 446-amino-acid chain; its full sequence is Argininosuccinate synthase (446 aa).

ATP-binding positions include 17 to 25 (AFSGGLDTS) and alanine 43. Tyrosine 99 contributes to the L-citrulline binding site. Positions 129 and 131 each coordinate ATP. 3 residues coordinate L-aspartate: threonine 131, asparagine 135, and aspartate 136. Asparagine 135 is a binding site for L-citrulline. Aspartate 136 is a binding site for ATP. Residues arginine 139 and serine 192 each contribute to the L-citrulline site. Position 194 (aspartate 194) interacts with ATP. 3 residues coordinate L-citrulline: threonine 201, glutamate 203, and glutamate 280.

Belongs to the argininosuccinate synthase family. Type 2 subfamily. Homotetramer.

It localises to the cytoplasm. The enzyme catalyses L-citrulline + L-aspartate + ATP = 2-(N(omega)-L-arginino)succinate + AMP + diphosphate + H(+). It participates in amino-acid biosynthesis; L-arginine biosynthesis; L-arginine from L-ornithine and carbamoyl phosphate: step 2/3. The chain is Argininosuccinate synthase from Polaromonas sp. (strain JS666 / ATCC BAA-500).